A 312-amino-acid polypeptide reads, in one-letter code: Homoserine O-acetyltransferase (312 aa).

Cysteine 142 functions as the Acyl-thioester intermediate in the catalytic mechanism. Substrate-binding residues include lysine 163 and serine 194. The Proton acceptor role is filled by histidine 237. The active site involves glutamate 239. Arginine 251 is a substrate binding site.

Belongs to the MetA family.

The protein localises to the cytoplasm. The catalysed reaction is L-homoserine + acetyl-CoA = O-acetyl-L-homoserine + CoA. It participates in amino-acid biosynthesis; L-methionine biosynthesis via de novo pathway; O-acetyl-L-homoserine from L-homoserine: step 1/1. Functionally, transfers an acetyl group from acetyl-CoA to L-homoserine, forming acetyl-L-homoserine. In Catenibacterium mitsuokai (strain DSM 15897 / JCM 10609 / CCUG 48821 A / CIP 106738 / RCA14-39), this protein is Homoserine O-acetyltransferase.